Here is a 622-residue protein sequence, read N- to C-terminus: MKRNGFKIGVTLALLLLCGYYLYPTVRYALLQRKLNRMSEEERAAFIEANYGTIQSLRERALKLGLDLQGGMHVTLEVRVDALIRELATDVDETFEEVLAAARERARSGDVSLIDAFVEEFERRDPNARLSRYFRNPDAGITRRSSNEEVAAYLRQQAEEAVNRAIEIIRDRVDRYGVTEPVIQKQGTRRIVVELPGVDDPERVRRLLRGTARLEFRLMADPQLLQAALQDIIAYYEPDTTAASETSAVTDTATADTSLAALLGEQPSPERPRNPLLAVMQPVGQGVVFGIVAGPDTAQVNRLLRNPEVQALLPSGIELLYTANPVGTDEQGRPLYYLLGVRKEVELTGEVITDARVEFDELNRPQVSMTMNSEGARIWARLTGANVGKHIAIVLDNVVYSYPVVNERIPSGRSSITGLDSREEAQDIVTVLKSGALPAPVDIIEERTVGPSLGEASIRAGLRSVLTGLLLVALFMIFYYRTGGMIADLALVLNIIFILGILAAFNATLTLPGIAGIVLTIGMAVDANVLIFERIREEQATGKTLRAAIDLGYSKAFSAIFDANITTFFTAAILYSFGVGPIQGFAVTLMAGIAASLFSAIVITRIIFDYLVLERKLMVSVG.

6 consecutive transmembrane segments (helical) span residues 6–26 (FKIGVTLALLLLCGYYLYPTV), 460–480 (AGLRSVLTGLLLVALFMIFYY), 485–505 (MIADLALVLNIIFILGILAAF), 512–532 (PGIAGIVLTIGMAVDANVLIF), 559–579 (AIFDANITTFFTAAILYSFGV), and 584–604 (GFAVTLMAGIAASLFSAIVIT).

It belongs to the SecD/SecF family. SecD subfamily. Forms a complex with SecF. Part of the essential Sec protein translocation apparatus which comprises SecA, SecYEG and auxiliary proteins SecDF. Other proteins may also be involved.

The protein localises to the cell inner membrane. Its function is as follows. Part of the Sec protein translocase complex. Interacts with the SecYEG preprotein conducting channel. SecDF uses the proton motive force (PMF) to complete protein translocation after the ATP-dependent function of SecA. This is Protein translocase subunit SecD from Rhodothermus marinus (strain ATCC 43812 / DSM 4252 / R-10) (Rhodothermus obamensis).